A 231-amino-acid chain; its full sequence is uncharacterized protein (231 aa).

10–34 (VVTGAGSGIGEAIATLLHEEGAKVV) serves as a coordination point for NADP(+). Residue Ser-140 participates in substrate binding. The active-site Proton acceptor is the Tyr-153.

Belongs to the short-chain dehydrogenases/reductases (SDR) family.

This is an uncharacterized protein from Staphylococcus aureus (strain MW2).